The sequence spans 282 residues: Shikimate dehydrogenase (NADP(+)) (282 aa).

Residues 19–21 and Thr-66 each bind shikimate; that span reads TQS. Residue Lys-70 is the Proton acceptor of the active site. Shikimate is bound by residues Asn-91 and Asp-107. NADP(+) contacts are provided by residues 132-136, 155-160, Ile-224, and Gly-246; these read GAGGA and NRTITR.

Belongs to the shikimate dehydrogenase family. In terms of assembly, homodimer.

It carries out the reaction shikimate + NADP(+) = 3-dehydroshikimate + NADPH + H(+). It participates in metabolic intermediate biosynthesis; chorismate biosynthesis; chorismate from D-erythrose 4-phosphate and phosphoenolpyruvate: step 4/7. Involved in the biosynthesis of the chorismate, which leads to the biosynthesis of aromatic amino acids. Catalyzes the reversible NADPH linked reduction of 3-dehydroshikimate (DHSA) to yield shikimate (SA). The chain is Shikimate dehydrogenase (NADP(+)) from Buchnera aphidicola subsp. Baizongia pistaciae (strain Bp).